Consider the following 729-residue polypeptide: Denticleless protein homolog (729 aa).

M1 is modified (N-acetylmethionine). 3 WD repeats span residues 47–89 (GVPV…SKKT), 96–135 (AHWN…LMGT), and 138–178 (GHQC…KDGF). Residues 168-171 (WDTR) carry the DDB1-binding motif motif. Over residues 189–198 (HNTADKQTPS) the composition is skewed to polar residues. The segment at 189–212 (HNTADKQTPSKPKKKQNSKGLAPA) is disordered. T196 carries the phosphothreonine modification. A Nuclear localization signal motif is present at residues 197-203 (PSKPKKK). WD repeat units lie at residues 214-253 (DSQQ…TAYR), 269-308 (TRKL…TSPV), 313-354 (GHQN…HPPT), and 358-398 (GHSQ…EEKP). The DDB1-binding motif signature appears at 243 to 246 (WDLR). Phosphoserine is present on residues S409 and S425. Disordered stretches follow at residues 416–445 (KACP…SSPS) and 460–491 (PSST…VSPK). Residues 427–445 (STPAKAPRAKSSPSISSPS) are compositionally biased toward low complexity. The span at 460–475 (PSSTPTFSVKTTPATT) shows a compositional bias: polar residues. T463 bears the Phosphothreonine; by CDK1 and CDK2 mark. The segment covering 476–491 (RSSVSRRGSISSVSPK) has biased composition (low complexity). Phosphoserine occurs at positions 484, 489, 494, and 511. Residues 504–546 (VTRTPSSSPPVTPPASETKISSPRKALIPVSQKSSQADACSES) are disordered. A Phosphothreonine modification is found at T515. S556 is modified (phosphoserine). Polar residues predominate over residues 596–607 (VLSQDSEGPTKS). Positions 596-705 (VLSQDSEGPT…GPVTITPSSM (110 aa)) are disordered. 2 stretches are compositionally biased toward low complexity: residues 630-645 (EGCG…CGEG) and 674-688 (SSPR…SSRR). Phosphoserine occurs at positions 675 and 678. 2 positions are modified to phosphothreonine: T683 and T701.

The protein belongs to the WD repeat cdt2 family. Component of the DCX(DTL) E3 ubiquitin ligase complex (also called CRL4(CDT2)), at least composed of CUL4 (CUL4A or CUL4B), DDB1, DTL/CDT2 and RBX1. Interacts with CDKN1A and DDB1. Interacts with FBXO11; SCF(FBXWO11) controls DTL stability but DCX(DTL) does not control FBXO11 stability. Interacts with CRY1. Post-translationally, ubiquitinated by the anaphase promoting complex/cyclosome (APC/C). Autoubiquitinated through 'Lys-48'-polyubiquitin chains in a PCNA-independent reaction, allowing proteasomal turnover. Polyubiquitinated by SCF(FBXO11) when not phosphorylated, leading to its degradation. A tight regulation of the polyubiquitination by SCF(FBXO11) is involved in the control of different processes such as TGF-beta signaling, cell cycle progression and exit. Phosphorylated at Thr-463 by CDK1/Cyclin B and CDK2/Cycnlin A but not by CDK2/Cyclin E, MAPK1 or PLK1. Phosphorylation at Thr-463 inhibits the interaction with FBXO11 and decreases upon cell cycle exit induced by TGF-beta or serum starvation.

It localises to the nucleus. Its subcellular location is the nucleus membrane. The protein localises to the cytoplasm. It is found in the cytoskeleton. The protein resides in the microtubule organizing center. It localises to the centrosome. Its subcellular location is the chromosome. It participates in protein modification; protein ubiquitination. In terms of biological role, substrate-specific adapter of a DCX (DDB1-CUL4-X-box) E3 ubiquitin-protein ligase complex required for cell cycle control, DNA damage response and translesion DNA synthesis. The DCX(DTL) complex, also named CRL4(CDT2) complex, mediates the polyubiquitination and subsequent degradation of CDT1, CDKN1A/p21(CIP1), FBH1, KMT5A and SDE2. CDT1 degradation in response to DNA damage is necessary to ensure proper cell cycle regulation of DNA replication. CDKN1A/p21(CIP1) degradation during S phase or following UV irradiation is essential to control replication licensing. KMT5A degradation is also important for a proper regulation of mechanisms such as TGF-beta signaling, cell cycle progression, DNA repair and cell migration. Most substrates require their interaction with PCNA for their polyubiquitination: substrates interact with PCNA via their PIP-box, and those containing the 'K+4' motif in the PIP box, recruit the DCX(DTL) complex, leading to their degradation. In undamaged proliferating cells, the DCX(DTL) complex also promotes the 'Lys-164' monoubiquitination of PCNA, thereby being involved in PCNA-dependent translesion DNA synthesis. The DDB1-CUL4A-DTL E3 ligase complex regulates the circadian clock function by mediating the ubiquitination and degradation of CRY1. The sequence is that of Denticleless protein homolog (Dtl) from Mus musculus (Mouse).